The following is a 245-amino-acid chain: MTLDVDAQKKDEKLLLSTIQQEYKILAEYKMIESEKVSGIYVIPSYANSLQWFGVFFGRQGFYENSVFRFSILLPDGFPDDKAVPAIIFQHNVVHPLVCPYTNSLDISHAFPEWRCGEDHLWQVLKYIQAIFADPLDSIRSVANIQELSNPEASKLLNTNRDAYAALVQESIVESKSRVYDTPPTEDPHYIVFEKFQANVHGPVLDQIRKSRNTIVPAESGVGGAATGLSWVKVKEGDFKPLSIE.

Residues 20–177 (QQEYKILAEY…VQESIVESKS (158 aa)) enclose the UBC core domain.

This sequence belongs to the ubiquitin-conjugating enzyme family. FTS subfamily.

The polypeptide is Protein crossbronx (cbx) (Drosophila virilis (Fruit fly)).